A 368-amino-acid polypeptide reads, in one-letter code: Phenylalanine--tRNA ligase alpha subunit (368 aa).

Residue Glu-268 coordinates Mg(2+).

It belongs to the class-II aminoacyl-tRNA synthetase family. Phe-tRNA synthetase alpha subunit type 1 subfamily. Tetramer of two alpha and two beta subunits. Mg(2+) is required as a cofactor.

It is found in the cytoplasm. It catalyses the reaction tRNA(Phe) + L-phenylalanine + ATP = L-phenylalanyl-tRNA(Phe) + AMP + diphosphate + H(+). In Nitrobacter hamburgensis (strain DSM 10229 / NCIMB 13809 / X14), this protein is Phenylalanine--tRNA ligase alpha subunit.